Consider the following 404-residue polypeptide: Cysteine desulfurase IscS (404 aa).

Residues 75 to 76 (AT), Asn-155, Gln-183, and 203 to 205 (SAH) each bind pyridoxal 5'-phosphate. Residue Lys-206 is modified to N6-(pyridoxal phosphate)lysine. Thr-243 contributes to the pyridoxal 5'-phosphate binding site. Catalysis depends on Cys-328, which acts as the Cysteine persulfide intermediate. Cys-328 contacts [2Fe-2S] cluster.

The protein belongs to the class-V pyridoxal-phosphate-dependent aminotransferase family. NifS/IscS subfamily. In terms of assembly, homodimer. Forms a heterotetramer with IscU, interacts with other sulfur acceptors. The cofactor is pyridoxal 5'-phosphate.

It is found in the cytoplasm. The catalysed reaction is (sulfur carrier)-H + L-cysteine = (sulfur carrier)-SH + L-alanine. The protein operates within cofactor biosynthesis; iron-sulfur cluster biosynthesis. Its function is as follows. Master enzyme that delivers sulfur to a number of partners involved in Fe-S cluster assembly, tRNA modification or cofactor biosynthesis. Catalyzes the removal of elemental sulfur atoms from cysteine to produce alanine. Functions as a sulfur delivery protein for Fe-S cluster synthesis onto IscU, an Fe-S scaffold assembly protein, as well as other S acceptor proteins. This Neisseria meningitidis serogroup A / serotype 4A (strain DSM 15465 / Z2491) protein is Cysteine desulfurase IscS.